The following is a 292-amino-acid chain: Inhibitory synaptic factor 1 (292 aa).

3 disordered regions span residues 1–25 (MNIRGTPDLGQPSDDPSSGGERERI), 122–186 (SDSV…ERVR), and 198–292 (CDDE…KGKN). Residues 23 to 63 (ERIRQRMKMVIGQLEDILRELKEVAKELREVVSQIDKLTSD) are a coiled coil. Residues 198 to 214 (CDDEEGDGEEEAAEEEG) show a composition bias toward acidic residues. Residues 263 to 285 (RNSSTQTVSDKSTQTVLPYTATR) show a composition bias toward polar residues.

This sequence belongs to the INSYN1 family. Interacts with GPHN.

It is found in the postsynaptic density. Its function is as follows. Component of the protein machinery at the inhibitory synapses, probably acting as a scaffold. Inhibitory synapses dampen neuronal activity through postsynaptic hyperpolarization. This synaptic inhibition is fundamental for the functioning of the central nervous system, shaping and orchestrating the flow of information through neuronal networks to generate a precise neural code. This chain is Inhibitory synaptic factor 1, found in Bos taurus (Bovine).